Here is a 166-residue protein sequence, read N- to C-terminus: Large ribosomal subunit protein bL9 (166 aa).

It belongs to the bacterial ribosomal protein bL9 family.

Its function is as follows. Binds to the 23S rRNA. This chain is Large ribosomal subunit protein bL9, found in Brachyspira hyodysenteriae (strain ATCC 49526 / WA1).